A 307-amino-acid chain; its full sequence is Protein phosphatase PTC7 homolog fig (307 aa).

One can recognise a PPM-type phosphatase domain in the interval 41-300; that stretch reads VQGSSKDQQL…DDITVILASV (260 aa). Residues Asp-77, Gly-78, and Asp-222 each coordinate Mn(2+).

This sequence belongs to the PP2C family. Requires Mg(2+) as cofactor. It depends on Mn(2+) as a cofactor.

It carries out the reaction O-phospho-L-seryl-[protein] + H2O = L-seryl-[protein] + phosphate. The catalysed reaction is O-phospho-L-threonyl-[protein] + H2O = L-threonyl-[protein] + phosphate. This is Protein phosphatase PTC7 homolog fig from Drosophila grimshawi (Hawaiian fruit fly).